The primary structure comprises 361 residues: Feruloyl CoA ortho-hydroxylase 1 (361 aa).

A Fe2OG dioxygenase domain is found at 204–312 (TKESLFMGSI…RISVPIFVNP (109 aa)). Tyrosine 220 is a binding site for 2-oxoglutarate. 3 residues coordinate Fe cation: histidine 235, aspartate 237, and histidine 293. Positions 303 and 305 each coordinate 2-oxoglutarate.

This sequence belongs to the iron/ascorbate-dependent oxidoreductase family. Requires L-ascorbate as cofactor. Fe(2+) is required as a cofactor. In terms of tissue distribution, highly expressed in roots, especially in the cortex.

It carries out the reaction (E)-feruloyl-CoA + 2-oxoglutarate + O2 = (E)-6-hydroxyferuloyl-CoA + succinate + CO2. The enzyme catalyses (E)-6-hydroxyferuloyl-CoA = scopoletin + CoA. Its pathway is phenylpropanoid metabolism. Its function is as follows. 2-oxoglutarate (OG)- and Fe(II)-dependent dioxygenase (2OGD) involved in scopoletin biosynthesis. Converts feruloyl CoA into 6'-hydroxyferuloyl CoA but has no activity with ferulic acid, feruloylquinic acid, caffeic acid, caffeoyl CoA, p-coumaric acid, cinnamic acid, cinnamoyl CoA or benzoyl CoA. Required for the production and secretion of compounds (e.g. fluorescent coumarins) that facilitate the mobilization and uptake of iron from sources with low bioavailability or in high pH-induced iron deficiency conditions. Involved in the pathway of sideretin biosynthesis from feruloyl CoA, a redox-active catecholic metabolite exuded by roots in response to iron deficiency in order to facilitate the uptake of iron; this pathway consists in the successive conversion from feruloyl CoA to scopoletin, from scopoletin to fraxetin and from fraxetin to sideretin. Catalyzes the biosynthesis of scopoletin from feruloyl CoA. The chain is Feruloyl CoA ortho-hydroxylase 1 from Arabidopsis thaliana (Mouse-ear cress).